A 91-amino-acid polypeptide reads, in one-letter code: DNA-binding protein HU (91 aa).

It belongs to the bacterial histone-like protein family.

Its function is as follows. Histone-like DNA-binding protein which is capable of wrapping DNA to stabilize it, and thus to prevent its denaturation under extreme environmental conditions. This is DNA-binding protein HU (hup) from Clostridium pasteurianum.